The sequence spans 230 residues: 5'-methylthioadenosine/S-adenosylhomocysteine nucleosidase (230 aa).

Catalysis depends on E12, which acts as the Proton acceptor. Substrate is bound by residues G78, V152, and 173 to 174 (ME). D197 (proton donor) is an active-site residue.

Belongs to the PNP/UDP phosphorylase family. MtnN subfamily.

The enzyme catalyses S-adenosyl-L-homocysteine + H2O = S-(5-deoxy-D-ribos-5-yl)-L-homocysteine + adenine. It catalyses the reaction S-methyl-5'-thioadenosine + H2O = 5-(methylsulfanyl)-D-ribose + adenine. The catalysed reaction is 5'-deoxyadenosine + H2O = 5-deoxy-D-ribose + adenine. The protein operates within amino-acid biosynthesis; L-methionine biosynthesis via salvage pathway; S-methyl-5-thio-alpha-D-ribose 1-phosphate from S-methyl-5'-thioadenosine (hydrolase route): step 1/2. Its function is as follows. Catalyzes the irreversible cleavage of the glycosidic bond in both 5'-methylthioadenosine (MTA) and S-adenosylhomocysteine (SAH/AdoHcy) to adenine and the corresponding thioribose, 5'-methylthioribose and S-ribosylhomocysteine, respectively. Also cleaves 5'-deoxyadenosine, a toxic by-product of radical S-adenosylmethionine (SAM) enzymes, into 5-deoxyribose and adenine. The polypeptide is 5'-methylthioadenosine/S-adenosylhomocysteine nucleosidase (Glaesserella parasuis serovar 5 (strain SH0165) (Haemophilus parasuis)).